The primary structure comprises 359 residues: Src kinase-associated phosphoprotein 2 (359 aa).

3 positions are modified to phosphoserine: Ser5, Ser6, and Ser9. A disordered region spans residues 67–88 (GDAEDGEEYDDPFAGPPDTISL). Tyr75 bears the Phosphotyrosine mark. Phosphoserine occurs at positions 87 and 90. Positions 116–219 (FVLKAGYLEK…WVQQLKFVLQ (104 aa)) constitute a PH domain. Tyr151 and Tyr197 each carry phosphotyrosine. Ser223 is modified (phosphoserine). Residue Tyr261 is modified to Phosphotyrosine. Ser286 is modified (phosphoserine). The SH3 domain maps to 297–358 (DYANFYQGLW…PKAYIMEMYD (62 aa)).

It belongs to the SKAP family. Interacts with FYB1, which is required for SKAP2 protein stability. Interacts with PTPNS1. Part of a complex consisting of SKAP2, FYB1 and PTPNS1. Part of a complex consisting of SKAP2, FYB1 and LILRB3. Interacts with LAT, GRB2, PTK2B, and PRAM1. May interact with actin. May interact with FYN, HCK and LYN. Interacts with FASLG.

It is found in the cytoplasm. Its function is as follows. May be involved in B-cell and macrophage adhesion processes. In B-cells, may act by coupling the B-cell receptor (BCR) to integrin activation. May play a role in src signaling pathway. The protein is Src kinase-associated phosphoprotein 2 (SKAP2) of Pongo abelii (Sumatran orangutan).